A 428-amino-acid chain; its full sequence is Maltoporin (428 aa).

Residues 1-21 form the signal peptide; it reads MKKTLLAVAIGGAMFATSAAA.

Belongs to the porin LamB (TC 1.B.3) family. Homotrimer formed of three 18-stranded antiparallel beta-barrels, containing three independent channels.

Its subcellular location is the cell outer membrane. It carries out the reaction beta-maltose(in) = beta-maltose(out). In terms of biological role, involved in the transport of maltose and maltodextrins. In Mannheimia succiniciproducens (strain KCTC 0769BP / MBEL55E), this protein is Maltoporin.